The sequence spans 1650 residues: Transmembrane domain-containing protein DDB_G0287209 (1650 aa).

Residues 194–225 (NNNNNNFNNNNNNNNNNNNNKNNYNNNKSNLI) are a coiled coil. Disordered regions lie at residues 197-216 (NNNF…NKNN) and 1218-1296 (ENQF…NINN). Residues 1224 to 1284 (NNNENSGSSG…SNSNENNYNG (61 aa)) are compositionally biased toward low complexity. Helical transmembrane passes span 1314 to 1334 (PLLL…LSLF), 1347 to 1369 (ILFL…LQLF), 1390 to 1410 (ISIS…DVTS), 1454 to 1474 (WNIY…LIVP), 1489 to 1509 (ILFI…VILF), 1515 to 1535 (WWDL…VTLL), 1539 to 1559 (PVYF…QFAF), 1570 to 1590 (VENL…TSII), and 1595 to 1615 (FNLI…ITII).

It is found in the membrane. The protein is Transmembrane domain-containing protein DDB_G0287209 of Dictyostelium discoideum (Social amoeba).